We begin with the raw amino-acid sequence, 456 residues long: Bifunctional protein GlmU (456 aa).

The pyrophosphorylase stretch occupies residues 1 to 229 (MYNCAIILAA…FEETMGVNSR (229 aa)). UDP-N-acetyl-alpha-D-glucosamine is bound by residues 8–11 (LAAG), K22, Q73, and 78–79 (GT). D103 provides a ligand contact to Mg(2+). The UDP-N-acetyl-alpha-D-glucosamine site is built by G140, E155, N170, and N227. N227 is a binding site for Mg(2+). The tract at residues 230–250 (VQLAEAEKIMRNRINKIHMEN) is linker. The N-acetyltransferase stretch occupies residues 251 to 456 (GVTLIDHNNT…SWVYKKGLKK (206 aa)). Residues R332 and K350 each contribute to the UDP-N-acetyl-alpha-D-glucosamine site. H362 (proton acceptor) is an active-site residue. UDP-N-acetyl-alpha-D-glucosamine-binding residues include Y365 and N376. Residues 385–386 (NY), A422, and R439 each bind acetyl-CoA.

This sequence in the N-terminal section; belongs to the N-acetylglucosamine-1-phosphate uridyltransferase family. In the C-terminal section; belongs to the transferase hexapeptide repeat family. In terms of assembly, homotrimer. Mg(2+) is required as a cofactor.

Its subcellular location is the cytoplasm. It carries out the reaction alpha-D-glucosamine 1-phosphate + acetyl-CoA = N-acetyl-alpha-D-glucosamine 1-phosphate + CoA + H(+). It catalyses the reaction N-acetyl-alpha-D-glucosamine 1-phosphate + UTP + H(+) = UDP-N-acetyl-alpha-D-glucosamine + diphosphate. The protein operates within nucleotide-sugar biosynthesis; UDP-N-acetyl-alpha-D-glucosamine biosynthesis; N-acetyl-alpha-D-glucosamine 1-phosphate from alpha-D-glucosamine 6-phosphate (route II): step 2/2. Its pathway is nucleotide-sugar biosynthesis; UDP-N-acetyl-alpha-D-glucosamine biosynthesis; UDP-N-acetyl-alpha-D-glucosamine from N-acetyl-alpha-D-glucosamine 1-phosphate: step 1/1. It participates in bacterial outer membrane biogenesis; LPS lipid A biosynthesis. Its function is as follows. Catalyzes the last two sequential reactions in the de novo biosynthetic pathway for UDP-N-acetylglucosamine (UDP-GlcNAc). The C-terminal domain catalyzes the transfer of acetyl group from acetyl coenzyme A to glucosamine-1-phosphate (GlcN-1-P) to produce N-acetylglucosamine-1-phosphate (GlcNAc-1-P), which is converted into UDP-GlcNAc by the transfer of uridine 5-monophosphate (from uridine 5-triphosphate), a reaction catalyzed by the N-terminal domain. The sequence is that of Bifunctional protein GlmU from Clostridium kluyveri (strain NBRC 12016).